The following is a 407-amino-acid chain: Cathepsin D (407 aa).

The N-terminal stretch at 1–20 is a signal peptide; it reads MQTPGVLLLILGLLDASSSA. The propeptide at 21–64 is activation peptide; that stretch reads LIRIPLRKFTSIRRTMTEVGGSVEDLILKGPITKYSMQSSPRTK. The region spanning 79-402 is the Peptidase A1 domain; sequence YYGEIGIGTP…DREYNRVGFA (324 aa). Cystine bridges form between Cys-91/Cys-160 and Cys-110/Cys-117. Asp-97 is an active-site residue. N-linked (GlcNAc...) asparagine glycans are attached at residues Asn-134 and Asn-258. Cys-281 and Cys-285 are disulfide-bonded. Residue Asp-290 is part of the active site. Cys-324 and Cys-361 are joined by a disulfide.

The protein belongs to the peptidase A1 family. As to quaternary structure, occurs as a mixture of both a single chain form and two types of two chain (light and heavy) forms. Interacts with ADAM30; this leads to activation of CTSD. In terms of processing, N- and O-glycosylated. Post-translationally, undergoes proteolytic cleavage and activation by ADAM30.

The protein resides in the lysosome. The protein localises to the melanosome. Its subcellular location is the secreted. It localises to the extracellular space. It carries out the reaction Specificity similar to, but narrower than, that of pepsin A. Does not cleave the 4-Gln-|-His-5 bond in B chain of insulin.. Its function is as follows. Acid protease active in intracellular protein breakdown. Plays a role in APP processing following cleavage and activation by ADAM30 which leads to APP degradation. In Rattus norvegicus (Rat), this protein is Cathepsin D (Ctsd).